The following is a 147-amino-acid chain: Hemoglobin subunit beta (147 aa).

Residues 2–147 (ELTEAQRGAI…VVSALGKQYH (146 aa)) enclose the Globin domain. Residues histidine 63 and histidine 92 each coordinate heme b.

This sequence belongs to the globin family. Heterotetramer of two alpha chains and two beta chains. As to expression, red blood cells.

Its function is as follows. Involved in oxygen transport from gills to the various peripheral tissues. In Electrophorus electricus (Electric eel), this protein is Hemoglobin subunit beta (hbb).